A 197-amino-acid polypeptide reads, in one-letter code: GTP cyclohydrolase-2 (197 aa).

GTP is bound at residue 49–53 (RVHSE). Cys-54, Cys-65, and Cys-67 together coordinate Zn(2+). GTP-binding positions include Gln-70, 92–94 (EGR), and Thr-114. The active-site Proton acceptor is the Asp-126. Catalysis depends on Arg-128, which acts as the Nucleophile. Residues Thr-149 and Lys-154 each contribute to the GTP site.

The protein belongs to the GTP cyclohydrolase II family. In terms of assembly, homodimer. Zn(2+) serves as cofactor.

It carries out the reaction GTP + 4 H2O = 2,5-diamino-6-hydroxy-4-(5-phosphoribosylamino)-pyrimidine + formate + 2 phosphate + 3 H(+). The protein operates within cofactor biosynthesis; riboflavin biosynthesis; 5-amino-6-(D-ribitylamino)uracil from GTP: step 1/4. Its function is as follows. Catalyzes the conversion of GTP to 2,5-diamino-6-ribosylamino-4(3H)-pyrimidinone 5'-phosphate (DARP), formate and pyrophosphate. The polypeptide is GTP cyclohydrolase-2 (Cronobacter sakazakii (strain ATCC BAA-894) (Enterobacter sakazakii)).